Here is a 196-residue protein sequence, read N- to C-terminus: Anthranilate synthase component 2 (196 aa).

The Glutamine amidotransferase type-1 domain occupies 4-196 (LILIIDNYDS…RDILENFLRM (193 aa)). 60 to 62 (GPG) is an L-glutamine binding site. The Nucleophile; for GATase activity role is filled by Cys89. L-glutamine is bound by residues Gln93 and 138 to 139 (SL). Catalysis depends on for GATase activity residues His177 and Glu179.

In terms of assembly, heterotetramer consisting of two non-identical subunits: a beta subunit (TrpG) and a large alpha subunit (TrpE).

It carries out the reaction chorismate + L-glutamine = anthranilate + pyruvate + L-glutamate + H(+). The protein operates within amino-acid biosynthesis; L-tryptophan biosynthesis; L-tryptophan from chorismate: step 1/5. In terms of biological role, part of a heterotetrameric complex that catalyzes the two-step biosynthesis of anthranilate, an intermediate in the biosynthesis of L-tryptophan. In the first step, the glutamine-binding beta subunit (TrpG) of anthranilate synthase (AS) provides the glutamine amidotransferase activity which generates ammonia as a substrate that, along with chorismate, is used in the second step, catalyzed by the large alpha subunit of AS (TrpE) to produce anthranilate. In the absence of TrpG, TrpE can synthesize anthranilate directly from chorismate and high concentrations of ammonia. The chain is Anthranilate synthase component 2 (trpG) from Methanothermobacter marburgensis (strain ATCC BAA-927 / DSM 2133 / JCM 14651 / NBRC 100331 / OCM 82 / Marburg) (Methanobacterium thermoautotrophicum).